A 179-amino-acid chain; its full sequence is Cell division protein ZapC (179 aa).

Belongs to the ZapC family. As to quaternary structure, interacts directly with FtsZ.

It is found in the cytoplasm. Contributes to the efficiency of the cell division process by stabilizing the polymeric form of the cell division protein FtsZ. Acts by promoting interactions between FtsZ protofilaments and suppressing the GTPase activity of FtsZ. The sequence is that of Cell division protein ZapC from Aliivibrio salmonicida (strain LFI1238) (Vibrio salmonicida (strain LFI1238)).